A 106-amino-acid polypeptide reads, in one-letter code: Cell division protein FtsB (106 aa).

Topologically, residues 1–3 (MRL) are cytoplasmic. Residues 4-21 (LTLIFVALIALLQYPLWL) traverse the membrane as a helical segment. Over 22–106 (GKGSWLRVWD…SPPAALTGAQ (85 aa)) the chain is Periplasmic. Residues 31–73 (DLNQKIVAQKAVNAELKLRNDTLDAEVRDLKQGNAAIEERARS) are a coiled coil.

The protein belongs to the FtsB family. In terms of assembly, part of a complex composed of FtsB, FtsL and FtsQ.

It is found in the cell inner membrane. In terms of biological role, essential cell division protein. May link together the upstream cell division proteins, which are predominantly cytoplasmic, with the downstream cell division proteins, which are predominantly periplasmic. This Methylobacillus flagellatus (strain ATCC 51484 / DSM 6875 / VKM B-1610 / KT) protein is Cell division protein FtsB.